The primary structure comprises 742 residues: Mechanosensitive ion channel protein 9 (742 aa).

The disordered stretch occupies residues 1-117 (MAERRVSNGE…REENGGRSLR (117 aa)). Basic and acidic residues predominate over residues 17–26 (SDKEDSKDPR). Residues S28 and S36 each carry the phosphoserine modification. Residues 105 to 117 (DSTREENGGRSLR) are compositionally biased toward basic and acidic residues. Phosphoserine occurs at positions 142 and 145. Helical transmembrane passes span 180–200 (AFLELVVFMAILGALIVSLTI), 221–241 (MVTLSGMLVTNWFMHFVVFII), 261–281 (NVQVFIWFSLVLIAWICLFDG), 292–312 (FLDFITWTIVSLLVGSILFLV), 524–544 (LITGILTVITFIVWMVLLDIA), and 559–579 (LAFMIGSTCKNIFESFMFVFV).

Belongs to the MscS (TC 1.A.23) family. In terms of tissue distribution, detected in the epidermis, cortex, and endodermis of the root tip.

It localises to the cell membrane. In terms of biological role, mechanosensitive channel that opens in response to stretch forces in the membrane lipid bilayer. This Arabidopsis thaliana (Mouse-ear cress) protein is Mechanosensitive ion channel protein 9 (MSL9).